Consider the following 153-residue polypeptide: Ribosomal RNA large subunit methyltransferase H (153 aa).

S-adenosyl-L-methionine-binding positions include I75, G103, and 121–126; that span reads LSAMTF.

It belongs to the RNA methyltransferase RlmH family. In terms of assembly, homodimer.

It is found in the cytoplasm. The enzyme catalyses pseudouridine(1915) in 23S rRNA + S-adenosyl-L-methionine = N(3)-methylpseudouridine(1915) in 23S rRNA + S-adenosyl-L-homocysteine + H(+). In terms of biological role, specifically methylates the pseudouridine at position 1915 (m3Psi1915) in 23S rRNA. In Helicobacter hepaticus (strain ATCC 51449 / 3B1), this protein is Ribosomal RNA large subunit methyltransferase H.